The primary structure comprises 106 residues: Large ribosomal subunit protein uL23 (106 aa).

This sequence belongs to the universal ribosomal protein uL23 family. Part of the 50S ribosomal subunit. Contacts protein L29, and trigger factor when it is bound to the ribosome.

One of the early assembly proteins it binds 23S rRNA. One of the proteins that surrounds the polypeptide exit tunnel on the outside of the ribosome. Forms the main docking site for trigger factor binding to the ribosome. This chain is Large ribosomal subunit protein uL23, found in Neisseria gonorrhoeae (strain ATCC 700825 / FA 1090).